A 461-amino-acid chain; its full sequence is Vimentin (461 aa).

Composition is skewed to low complexity over residues 1–14 and 35–52; these read MNRTTSRQTTSSSS and SSRQYSSPVRSSRMSYSV. A disordered region spans residues 1-52; that stretch reads MNRTTSRQTTSSSSYKRMFGGEGRPSVGMARSTLSSRQYSSPVRSSRMSYSV. Residues 1–91 are head; sequence MNRTTSRQTT…FALSDAINSE (91 aa). A coil 1A region spans residues 92-127; that stretch reads FKANRTNEKAEMQHLNDRFASYIDKVRFLEQQNKIL. Residues 92 to 127 are a coiled coil; that stretch reads FKANRTNEKAEMQHLNDRFASYIDKVRFLEQQNKIL. One can recognise an IF rod domain in the interval 99–407; the sequence is EKAEMQHLND…KLLEGEESRI (309 aa). The interval 128 to 149 is linker 1; the sequence is LAELEQLKGKGASRIGDLYEDE. Residues 150 to 241 adopt a coiled-coil conformation; it reads MRDLRRQVDQ…KLHDEEVAEL (92 aa). A coil 1B region spans residues 150 to 241; the sequence is MRDLRRQVDQ…KLHDEEVAEL (92 aa). Residues 242–264 form a linker 12 region; it reads QAQIQDQHVQIDMDVAKPDLTAA. The tract at residues 265–403 is coil 2; the sequence is LRDVRVQYET…ATYRKLLEGE (139 aa). Residues 299 to 403 adopt a coiled-coil conformation; it reads NRNTDAIRQA…ATYRKLLEGE (105 aa). The tail stretch occupies residues 404–461; the sequence is ESRITTPMPNFSSFNLRESMLEARPMIDNLSKKVVIKTIETRDGHVINESTQNHDDLE.

This sequence belongs to the intermediate filament family. Homomer assembled from elementary dimers. In terms of processing, one of the most prominent phosphoproteins in various cells of mesenchymal origin. Phosphorylation is enhanced during cell division, at which time vimentin filaments are significantly reorganized.

The protein localises to the cytoplasm. The protein resides in the cytoskeleton. It is found in the nucleus matrix. Functionally, vimentins are class-III intermediate filaments found in various non-epithelial cells, especially mesenchymal cells. Vimentin is attached to the nucleus, endoplasmic reticulum, and mitochondria, either laterally or terminally. The chain is Vimentin (vim) from Oncorhynchus mykiss (Rainbow trout).